The primary structure comprises 487 residues: Argininosuccinate lyase (487 aa).

Belongs to the lyase 1 family. Argininosuccinate lyase subfamily.

It is found in the cytoplasm. It carries out the reaction 2-(N(omega)-L-arginino)succinate = fumarate + L-arginine. It functions in the pathway amino-acid biosynthesis; L-arginine biosynthesis; L-arginine from L-ornithine and carbamoyl phosphate: step 3/3. This is Argininosuccinate lyase from Methanococcus aeolicus (strain ATCC BAA-1280 / DSM 17508 / OCM 812 / Nankai-3).